The following is a 1925-amino-acid chain: Cilia- and flagella-associated protein 65 (1925 aa).

The helical transmembrane segment at 188 to 208 (FFTVIPQPIFLSPGITLTLPI) threads the bilayer. The 110-residue stretch at 877–986 (QLKLDTHKSL…THYMLRLVGV (110 aa)) folds into the MSP domain. Positions 1525-1550 (SQQLMRQYHKELQEWKDEKVRQEVEF) form a coiled coil. Disordered regions lie at residues 1645-1667 (KRKA…WGPV) and 1736-1823 (SSWE…PESQ). Composition is skewed to basic and acidic residues over residues 1649–1661 (PREE…EKSP) and 1739–1762 (EDGK…KKEE). Residues 1763-1804 (GEEEKGEEEEEELEEEEEEEEETEEEELGKEEIEEKEEERDE) show a composition bias toward acidic residues.

Belongs to the CFAP65 family. Interacts with CFAP47.

The protein resides in the cell projection. The protein localises to the cilium. It is found in the flagellum membrane. Its subcellular location is the cytoplasmic vesicle. It localises to the secretory vesicle. The protein resides in the acrosome membrane. The protein localises to the cytoplasm. Plays a role in flagellar formation and sperm motility. This is Cilia- and flagella-associated protein 65 from Homo sapiens (Human).